Here is a 141-residue protein sequence, read N- to C-terminus: Large ribosomal subunit protein uL11 (141 aa).

Belongs to the universal ribosomal protein uL11 family. In terms of assembly, part of the ribosomal stalk of the 50S ribosomal subunit. Interacts with L10 and the large rRNA to form the base of the stalk. L10 forms an elongated spine to which L12 dimers bind in a sequential fashion forming a multimeric L10(L12)X complex. One or more lysine residues are methylated.

Its function is as follows. Forms part of the ribosomal stalk which helps the ribosome interact with GTP-bound translation factors. This Pediococcus pentosaceus (strain ATCC 25745 / CCUG 21536 / LMG 10740 / 183-1w) protein is Large ribosomal subunit protein uL11.